We begin with the raw amino-acid sequence, 314 residues long: Ribosomal protein uL3 glutamine methyltransferase (314 aa).

The protein belongs to the protein N5-glutamine methyltransferase family. PrmB subfamily.

It carries out the reaction L-glutaminyl-[ribosomal protein uL3] + S-adenosyl-L-methionine = N(5)-methyl-L-glutaminyl-[ribosomal protein uL3] + S-adenosyl-L-homocysteine + H(+). In terms of biological role, methylates large ribosomal subunit protein uL3 on a specific glutamine residue. The polypeptide is Ribosomal protein uL3 glutamine methyltransferase (Haemophilus influenzae (strain ATCC 51907 / DSM 11121 / KW20 / Rd)).